The sequence spans 356 residues: S-adenosylmethionine:tRNA ribosyltransferase-isomerase (356 aa).

It belongs to the QueA family. As to quaternary structure, monomer.

The protein localises to the cytoplasm. It catalyses the reaction 7-aminomethyl-7-carbaguanosine(34) in tRNA + S-adenosyl-L-methionine = epoxyqueuosine(34) in tRNA + adenine + L-methionine + 2 H(+). Its pathway is tRNA modification; tRNA-queuosine biosynthesis. In terms of biological role, transfers and isomerizes the ribose moiety from AdoMet to the 7-aminomethyl group of 7-deazaguanine (preQ1-tRNA) to give epoxyqueuosine (oQ-tRNA). In Salmonella arizonae (strain ATCC BAA-731 / CDC346-86 / RSK2980), this protein is S-adenosylmethionine:tRNA ribosyltransferase-isomerase.